We begin with the raw amino-acid sequence, 1053 residues long: Mediator of RNA polymerase II transcription subunit 16 (1053 aa).

Residues K139–P170 form a disordered region. Residues G142–K151 show a composition bias toward basic and acidic residues.

This sequence belongs to the Mediator complex subunit 16 family. In terms of assembly, component of the Mediator complex.

It localises to the nucleus. Component of the Mediator complex, a coactivator involved in the regulated transcription of nearly all RNA polymerase II-dependent genes. Mediator functions as a bridge to convey information from gene-specific regulatory proteins to the basal RNA polymerase II transcription machinery. Mediator is recruited to promoters by direct interactions with regulatory proteins and serves as a scaffold for the assembly of a functional preinitiation complex with RNA polymerase II and the general transcription factors. This Candida albicans (strain SC5314 / ATCC MYA-2876) (Yeast) protein is Mediator of RNA polymerase II transcription subunit 16 (SIN4).